The sequence spans 235 residues: Small ribosomal subunit protein uS3 (235 aa).

The region spanning 39-107 (VRKFLNKELA…PAQINIAEVK (69 aa)) is the KH type-2 domain.

The protein belongs to the universal ribosomal protein uS3 family. In terms of assembly, part of the 30S ribosomal subunit. Forms a tight complex with proteins S10 and S14.

Functionally, binds the lower part of the 30S subunit head. Binds mRNA in the 70S ribosome, positioning it for translation. In Actinobacillus pleuropneumoniae serotype 5b (strain L20), this protein is Small ribosomal subunit protein uS3.